The sequence spans 192 residues: Transmembrane protein 276 (192 aa).

The N-terminal stretch at 1–32 (MVSKPRTEWSTVLSHLVLAGVSLHAAVSSVQS) is a signal peptide. Helical transmembrane passes span 35 to 55 (GAAAGFLLQTFAAIIMLAPGP), 63 to 83 (AGAWVATVIGLPLLAFDFHWV), 92 to 112 (LLLGGGMVLAVAGDHLGPEGC), and 114 to 134 (VAGQAVLLVVAVTILIVAVFT).

It is found in the membrane. The polypeptide is Transmembrane protein 276 (Mus musculus (Mouse)).